The sequence spans 260 residues: Caveolae-associated protein 3 (260 aa).

Residues 1-84 form an interaction with CAVIN1 region; it reads MGESALESGP…SNTLAQLLAK (84 aa). A leucine-zipper region spans residues 20 to 78; sequence VHAVTVVTLLEKLATMLETLRERQGGLAQRQGGLAGSVRRIQSNLGALSRSHDTTSNTL. Residues Ser-62 and Ser-70 each carry the phosphoserine modification. Residue Lys-128 forms a Glycyl lysine isopeptide (Lys-Gly) (interchain with G-Cter in SUMO2) linkage. The tract at residues 135-201 is interaction with CAV1; that stretch reads AKAFQKAPEP…SGRKGHAAPT (67 aa). The interval 140-260 is disordered; sequence KAPEPLGPVE…AAVLQVESAA (121 aa). Residues 157-168 are compositionally biased toward acidic residues; sequence AEAEESSDEEEP. Phosphoserine occurs at positions 162, 163, and 171. Positions 201-210 are enriched in pro residues; sequence TPTPVKPPRL.

This sequence belongs to the CAVIN family. As to quaternary structure, component of the CAVIN complex composed of CAVIN1, CAVIN2, CAVIN3 and CAVIN4. Interacts with PRKCD and with phosphatidylserine. Phosphatidylserine may form a bridge between PKC and PKC-binding partners and stabilize the binding. Interacts with PER2. Interacts with CAVIN1 and EPS15L1. Interacts (via leucine-zipper domain) with CAV1 in a cholesterol-sensitive manner. In vitro, phosphorylated by PRKCD.

It localises to the cytoplasm. The protein localises to the membrane. It is found in the caveola. Its subcellular location is the cytosol. Functionally, regulates the traffic and/or budding of caveolae. Plays a role in caveola formation in a tissue-specific manner. Required for the formation of caveolae in smooth muscle but not in the lung and heart endothelial cells. Regulates the equilibrium between cell surface-associated and cell surface-dissociated caveolae by promoting the rapid release of caveolae from the cell surface. Plays a role in the regulation of the circadian clock. Modulates the period length and phase of circadian gene expression and also regulates expression and interaction of the core clock components PER1/2 and CRY1/2. This is Caveolae-associated protein 3 (CAVIN3) from Bos taurus (Bovine).